A 302-amino-acid chain; its full sequence is Aspartate carbamoyltransferase catalytic subunit (302 aa).

Carbamoyl phosphate is bound by residues Arg51 and Thr52. Lys80 is a binding site for L-aspartate. Residues Arg101, His129, and Gln132 each coordinate carbamoyl phosphate. Residues Arg162 and Arg224 each contribute to the L-aspartate site. Leu263 and Pro264 together coordinate carbamoyl phosphate.

Belongs to the aspartate/ornithine carbamoyltransferase superfamily. ATCase family. In terms of assembly, heterododecamer (2C3:3R2) of six catalytic PyrB chains organized as two trimers (C3), and six regulatory PyrI chains organized as three dimers (R2).

The enzyme catalyses carbamoyl phosphate + L-aspartate = N-carbamoyl-L-aspartate + phosphate + H(+). It participates in pyrimidine metabolism; UMP biosynthesis via de novo pathway; (S)-dihydroorotate from bicarbonate: step 2/3. Functionally, catalyzes the condensation of carbamoyl phosphate and aspartate to form carbamoyl aspartate and inorganic phosphate, the committed step in the de novo pyrimidine nucleotide biosynthesis pathway. This chain is Aspartate carbamoyltransferase catalytic subunit, found in Azobacteroides pseudotrichonymphae genomovar. CFP2.